The sequence spans 79 residues: MKTLLLTLVMVTIMCLDLGYTLTCYKGYHDTVVCKPHETICYEYFIPATHGNAILARGCGTSCPGGIRPVCCRTDLCNK.

A signal peptide spans 1–21 (MKTLLLTLVMVTIMCLDLGYT). Cystine bridges form between cysteine 24-cysteine 41, cysteine 34-cysteine 59, cysteine 63-cysteine 71, and cysteine 72-cysteine 77.

This sequence belongs to the three-finger toxin family. Short-chain subfamily. Type III alpha-neurotoxin sub-subfamily. Expressed by the venom gland.

It localises to the secreted. In terms of biological role, binds with high affinity to muscle nicotinic acetylcholine receptor (nAChR) and inhibit acetylcholine from binding to the receptor, thereby impairing neuromuscular transmission. Compete with the binding of alpha-bungarotoxin on muscle AChR (from Torpedo) with an IC(50) of 0.31 uM (SNTX1) and 3.1 uM (SNTX5). Is able of exerting muscle paralysis, spasms and increased respiration. In Pseudonaja textilis (Eastern brown snake), this protein is Short neurotoxin 1/5.